Reading from the N-terminus, the 411-residue chain is Imidazolonepropionase (411 aa).

Fe(3+) is bound by residues His-75 and His-77. 2 residues coordinate Zn(2+): His-75 and His-77. Residues Arg-84, Tyr-147, and His-180 each contribute to the 4-imidazolone-5-propanoate site. Tyr-147 provides a ligand contact to N-formimidoyl-L-glutamate. Position 245 (His-245) interacts with Fe(3+). His-245 is a Zn(2+) binding site. Gln-248 is a 4-imidazolone-5-propanoate binding site. Residue Asp-320 coordinates Fe(3+). Asp-320 contacts Zn(2+). Residues Asn-322 and Gly-324 each contribute to the N-formimidoyl-L-glutamate site. A 4-imidazolone-5-propanoate-binding site is contributed by Thr-325.

Belongs to the metallo-dependent hydrolases superfamily. HutI family. Zn(2+) is required as a cofactor. It depends on Fe(3+) as a cofactor.

The protein resides in the cytoplasm. It catalyses the reaction 4-imidazolone-5-propanoate + H2O = N-formimidoyl-L-glutamate. It functions in the pathway amino-acid degradation; L-histidine degradation into L-glutamate; N-formimidoyl-L-glutamate from L-histidine: step 3/3. Functionally, catalyzes the hydrolytic cleavage of the carbon-nitrogen bond in imidazolone-5-propanoate to yield N-formimidoyl-L-glutamate. It is the third step in the universal histidine degradation pathway. This chain is Imidazolonepropionase, found in Photobacterium profundum (strain SS9).